Reading from the N-terminus, the 212-residue chain is Peptide methionine sulfoxide reductase MsrA (212 aa).

Cys-52 is a catalytic residue.

The protein belongs to the MsrA Met sulfoxide reductase family.

It catalyses the reaction L-methionyl-[protein] + [thioredoxin]-disulfide + H2O = L-methionyl-(S)-S-oxide-[protein] + [thioredoxin]-dithiol. It carries out the reaction [thioredoxin]-disulfide + L-methionine + H2O = L-methionine (S)-S-oxide + [thioredoxin]-dithiol. In terms of biological role, has an important function as a repair enzyme for proteins that have been inactivated by oxidation. Catalyzes the reversible oxidation-reduction of methionine sulfoxide in proteins to methionine. The polypeptide is Peptide methionine sulfoxide reductase MsrA (Yersinia pseudotuberculosis serotype O:1b (strain IP 31758)).